The chain runs to 189 residues: Effector protein NleF (189 aa).

Residues 186-189 (LQCG) are interaction with host caspases.

As to quaternary structure, monomer. Interacts (via C-terminus) with human CASP4, CASP8 and CASP9.

It is found in the secreted. The protein resides in the host cytoplasm. In terms of biological role, effector protein that alters host cell physiology and promotes bacterial survival in host tissues. Inhibits the catalytic activity of human CASP4, CASP8 and CASP9, and thereby inhibits apoptosis of infected host cells. The protein is Effector protein NleF (nleF) of Escherichia coli O157:H7.